A 479-amino-acid chain; its full sequence is Aspartyl/glutamyl-tRNA(Asn/Gln) amidotransferase subunit B (479 aa).

It belongs to the GatB/GatE family. GatB subfamily. Heterotrimer of A, B and C subunits.

It catalyses the reaction L-glutamyl-tRNA(Gln) + L-glutamine + ATP + H2O = L-glutaminyl-tRNA(Gln) + L-glutamate + ADP + phosphate + H(+). It carries out the reaction L-aspartyl-tRNA(Asn) + L-glutamine + ATP + H2O = L-asparaginyl-tRNA(Asn) + L-glutamate + ADP + phosphate + 2 H(+). Its function is as follows. Allows the formation of correctly charged Asn-tRNA(Asn) or Gln-tRNA(Gln) through the transamidation of misacylated Asp-tRNA(Asn) or Glu-tRNA(Gln) in organisms which lack either or both of asparaginyl-tRNA or glutaminyl-tRNA synthetases. The reaction takes place in the presence of glutamine and ATP through an activated phospho-Asp-tRNA(Asn) or phospho-Glu-tRNA(Gln). This Geotalea daltonii (strain DSM 22248 / JCM 15807 / FRC-32) (Geobacter daltonii) protein is Aspartyl/glutamyl-tRNA(Asn/Gln) amidotransferase subunit B.